The primary structure comprises 652 residues: DNA ligase (652 aa).

NAD(+) is bound by residues 29–33, 78–79, and Glu107; these read DSEYD and SL. Lys109 functions as the N6-AMP-lysine intermediate in the catalytic mechanism. Residues Arg130, Glu164, Lys278, and Lys302 each contribute to the NAD(+) site. Cys395, Cys398, Cys413, and Cys418 together coordinate Zn(2+). The BRCT domain occupies 577 to 652; that stretch reads VADAALSGLT…VRDEAWLESL (76 aa).

This sequence belongs to the NAD-dependent DNA ligase family. LigA subfamily. It depends on Mg(2+) as a cofactor. Mn(2+) serves as cofactor.

It catalyses the reaction NAD(+) + (deoxyribonucleotide)n-3'-hydroxyl + 5'-phospho-(deoxyribonucleotide)m = (deoxyribonucleotide)n+m + AMP + beta-nicotinamide D-nucleotide.. Its function is as follows. DNA ligase that catalyzes the formation of phosphodiester linkages between 5'-phosphoryl and 3'-hydroxyl groups in double-stranded DNA using NAD as a coenzyme and as the energy source for the reaction. It is essential for DNA replication and repair of damaged DNA. The sequence is that of DNA ligase from Streptococcus pneumoniae serotype 4 (strain ATCC BAA-334 / TIGR4).